A 359-amino-acid chain; its full sequence is 4-galactosyl-N-acetylglucosaminide 3-alpha-L-fucosyltransferase 9 (359 aa).

The Cytoplasmic segment spans residues Met-1–Pro-11. Residues Phe-12–Pro-32 traverse the membrane as a helical; Signal-anchor for type II membrane protein segment. Residues Thr-33–Asn-359 are Lumenal-facing. Asn-62 is a glycosylation site (N-linked (GlcNAc...) asparagine). The tract at residues Glu-63–Tyr-168 is acceptor-binding. Gln-75 serves as a coordination point for a beta-D-galactosyl-(1-&gt;4)-N-acetyl-beta-D-glucosaminyl derivative. 3 disulfide bridges follow: Cys-82-Cys-335, Cys-91-Cys-338, and Cys-190-Cys-238. An N-linked (GlcNAc...) asparagine glycan is attached at Asn-101. Residue Glu-137 participates in a beta-D-galactosyl-(1-&gt;4)-N-acetyl-beta-D-glucosaminyl derivative binding. Catalysis depends on Glu-137, which acts as the Nucleophile. Glu-137 lines the GDP-beta-L-fucose pocket. N-linked (GlcNAc...) asparagine glycosylation occurs at Asn-153. GDP-beta-L-fucose contacts are provided by Tyr-168, Val-192, Ser-194, Asn-195, Arg-202, Val-226, Tyr-241, Asn-246, Tyr-252, Glu-255, and Lys-256. The segment at Gly-169–Leu-326 is donor-binding. Positions Pro-327 to Asn-359 are acceptor-binding.

Belongs to the glycosyltransferase 10 family. As to quaternary structure, homodimer. Post-translationally, N-glycosylated with complex-type N-glycans. As to expression, mainly detected in brain and kidney.

Its subcellular location is the golgi apparatus. The protein localises to the trans-Golgi network membrane. It is found in the golgi apparatus membrane. It catalyses the reaction a beta-D-galactosyl-(1-&gt;4)-N-acetyl-beta-D-glucosaminyl derivative + GDP-beta-L-fucose = a beta-D-galactosyl-(1-&gt;4)-[alpha-L-fucosyl-(1-&gt;3)]-N-acetyl-beta-D-glucosaminyl derivative + GDP + H(+). The enzyme catalyses an alpha-Neu5Ac-(2-&gt;3)-beta-D-Gal-(1-&gt;4)-beta-D-GlcNAc-(1-&gt;3)-beta-D-Gal-(1-&gt;4)-beta-D-GlcNAc derivative + GDP-beta-L-fucose = an alpha-Neu5Ac-(2-&gt;3)-beta-D-Gal-(1-&gt;4)-beta-D-GlcNAc-(1-&gt;3)-beta-D-Gal-(1-&gt;4)-[alpha-L-Fuc-(1-&gt;3)]-beta-D-GlcNAc derivative + GDP + H(+). It carries out the reaction alpha-N-glycoloylneuraminosyl-(2-&gt;3)-beta-D-galactosyl-(1-&gt;4)-N-acetyl-beta-D-glucosaminyl-(1-&gt;3)-beta-D-galactosyl-(1-&gt;4)-N-acetyl-beta-D-glucosaminyl-(1-&gt;3)-beta-D-galactosyl-(1-&gt;4)-beta-D-glucosyl-(1&lt;-&gt;1')-ceramide + GDP-beta-L-fucose = alpha-N-glycoloylneuraminosyl-(2-&gt;3)-beta-D-galactosyl-(1-&gt;4)-N-acetyl-beta-D-glucosaminyl-(1-&gt;3)-beta-D-galactosyl-(1-&gt;4)-[alpha-L-fucosyl-(1-&gt;3)]-N-acetyl-beta-D-glucosaminyl-(1-&gt;3)-beta-D-galactosyl-(1-&gt;4)-beta-D-glucosyl-(1&lt;-&gt;1')-ceramide + GDP + H(+). The catalysed reaction is alpha-D-galactosyl-(1-&gt;3)-beta-D-galactosyl-(1-&gt;4)-N-acetyl-beta-D-glucosaminyl-(1-&gt;3)-beta-D-galactosyl-(1-&gt;4)-beta-D-glucosyl-(1&lt;-&gt;1')-ceramide + GDP-beta-L-fucose = a neolactoside IV(3)-alpha-Gal,III(3)-alpha-Fuc-nLc4Cer + GDP + H(+). It catalyses the reaction a neolactoside nLc4Cer + GDP-beta-L-fucose = a neolactoside III(3)-alpha-Fuc-nLc4Cer + GDP + H(+). The enzyme catalyses an N-acetyl-alpha-neuraminyl-(2-&gt;3)-beta-D-galactosyl-(1-&gt;4)-N-acetyl-beta-D-glucosaminyl derivative + GDP-beta-L-fucose = an alpha-Neu5Ac-(2-&gt;3)-beta-D-Gal-(1-&gt;4)-[alpha-L-Fuc-(1-&gt;3)]-beta-D-GlcNAc derivative + GDP + H(+). It carries out the reaction beta-D-Gal-(1-&gt;4)-beta-D-GlcNAc-(1-&gt;3)-beta-D-Gal-(1-&gt;4)-D-Glc + GDP-beta-L-fucose = beta-D-Gal-(1-&gt;4)-[alpha-L-Fuc-(1-&gt;3)]-beta-D-GlcNAc-(1-&gt;3)-beta-D-Gal-(1-&gt;4)-D-Glc + GDP + H(+). The catalysed reaction is an alpha-L-Fuc-(1-&gt;2)-beta-D-Gal-(1-&gt;4)-beta-D-GlcNAc derivative + GDP-beta-L-fucose = an alpha-L-Fuc-(1-&gt;2)-beta-D-Gal-(1-&gt;4)-[alpha-L-Fuc-(1-&gt;3)]-beta-D-GlcNAc derivative + GDP + H(+). It participates in protein modification; protein glycosylation. It functions in the pathway glycolipid biosynthesis. Activated by Mn2+. Catalyzes alpha(1-&gt;3) linkage of fucosyl moiety transferred from GDP-beta-L-fucose to N-acetyl glucosamine (GlcNAc) within type 2 lactosamine (LacNAc, beta-D-Gal-(1-&gt;4)-beta-D-GlcNAc-) glycan attached to glycolipids and N- or O-linked glycoproteins. Fucosylates distal type 2 LacNAc and its fucosylated (H-type 2 LacNAc) and sialylated (sialyl-type 2 LacNAc) derivatives to form Lewis x (Lex) (CD15) and Lewis y (Ley) antigenic epitopes involved in cell adhesion and differentiation. Generates Lex epitopes in the brain, presumably playing a role in the maintenance of neuronal stemness and neurite outgrowth in progenitor neural cells. Fucosylates the internal type 2 LacNAc unit of the polylactosamine chain to form VIM-2 antigen that serves as recognition epitope for SELE. Can also modify milk oligosaccharides in particular type 2 tetrasaccharide LNnT. The sequence is that of 4-galactosyl-N-acetylglucosaminide 3-alpha-L-fucosyltransferase 9 from Mus musculus (Mouse).